An 843-amino-acid polypeptide reads, in one-letter code: MRSVPNYHHSFFIFLILILFLAFSVSPNTLSATESLTISSNKTIISPSQIFELGFFNPASSSRWYLGIWYKIIPIRTYVWVANRDNPLSSSNGTLKISGNNLVIFDQSDRPVWSTNITGGDVRSPVAAELLDNGNFLLRDSNNRLLWQSFDFPTDTLLAEMKLGWDQKTGFNRILRSWKTTDDPSSGEFSTKLETSEFPEFYICSKESILYRSGPWNGMRFSSVPGTIQVDYMVYNFTASKEEVTYSYRINKTNLYSRLYLNSAGLLQRLTWFETTQSWKQLWYSPKDLCDNYKVCGNFGYCDSNSLPNCYCIKGFKPVNEQAWDLRDGSAGCMRKTRLSCDGRDGFTRLKRMKLPDTTATIVDREIGLKVCKERCLEDCNCTAFANADIRNGGSGCVIWTREILDMRNYAKGGQDLYVRLAAAELEDKRIKNEKIIGSSIGVSILLLLSFVIFHFWKRKQKRSITIQTPNVDQVRSQDSLINDVVVSRRGYTSKEKKSEYLELPLLELEALATATNNFSNDNKLGQGGFGIVYKGRLLDGKEIAVKRLSKMSSQGTDEFMNEVRLIAKLQHINLVRLLGCCVDKGEKMLIYEYLENLSLDSHLFDQTRSSNLNWQKRFDIINGIARGLLYLHQDSRCRIIHRDLKASNVLLDKNMTPKISDFGMARIFGREETEANTRRVVGTYGYMSPEYAMDGIFSMKSDVFSFGVLLLEIISGKRNKGFYNSNRDLNLLGFVWRHWKEGNELEIVDPINIDSLSSKFPTHEILRCIQIGLLCVQERAEDRPVMSSVMVMLGSETTAIPQPKRPGFCIGRSPLEADSSSSTQRDDECTVNQITLSVIDAR.

Positions 1-31 (MRSVPNYHHSFFIFLILILFLAFSVSPNTLS) are cleaved as a signal peptide. Residues 32-151 (ATESLTISSN…NNRLLWQSFD (120 aa)) form the Bulb-type lectin domain. Residues 32–435 (ATESLTISSN…LEDKRIKNEK (404 aa)) are Extracellular-facing. N-linked (GlcNAc...) asparagine glycosylation is found at asparagine 41, asparagine 92, asparagine 116, asparagine 236, and asparagine 251. In terms of domain architecture, EGF-like; atypical spans 286–322 (PKDLCDNYKVCGNFGYCDSNSLPNCYCIKGFKPVNEQ). Cystine bridges form between cysteine 290–cysteine 302, cysteine 296–cysteine 310, cysteine 372–cysteine 397, and cysteine 376–cysteine 382. Residues 341 to 422 (CDGRDGFTRL…GGQDLYVRLA (82 aa)) form the PAN domain. Asparagine 381 is a glycosylation site (N-linked (GlcNAc...) asparagine). Residues 436–456 (IIGSSIGVSILLLLSFVIFHF) traverse the membrane as a helical segment. The Cytoplasmic portion of the chain corresponds to 457–843 (WKRKQKRSIT…QITLSVIDAR (387 aa)). Positions 519 to 809 (FSNDNKLGQG…AIPQPKRPGF (291 aa)) constitute a Protein kinase domain. Residues 525–533 (LGQGGFGIV) and lysine 547 contribute to the ATP site. Serine 553 is modified (phosphoserine). Residues 608-625 (TRSSNLNWQKRFDIINGI) form a caM-binding region. Aspartate 644 serves as the catalytic Proton acceptor. A phosphoserine mark is found at serine 648 and serine 661. Threonine 678 is modified (phosphothreonine). Serine 820 is subject to Phosphoserine.

The protein belongs to the protein kinase superfamily. Ser/Thr protein kinase family. As to quaternary structure, interacts with PUB9, PUB13, PUB14 and PUB38. Post-translationally, autophosphorylated on serine and threonine residues. In terms of tissue distribution, mostly expressed in leaves, and, to a lower extent, in stems and flower buds.

The protein localises to the cell membrane. The catalysed reaction is L-seryl-[protein] + ATP = O-phospho-L-seryl-[protein] + ADP + H(+). The enzyme catalyses L-threonyl-[protein] + ATP = O-phospho-L-threonyl-[protein] + ADP + H(+). Functionally, involved in the regulation of cellular expansion and differentiation. Mediates subcellular relocalization of PUB9 from nucleus to plasma membrane in a protein-phosphorylation-dependent manner. May be involved in the abscisic acid-mediated signaling pathway, at least during germination. This chain is Receptor-like serine/threonine-protein kinase SD1-7 (SD17), found in Arabidopsis thaliana (Mouse-ear cress).